The primary structure comprises 376 residues: Ribosomal RNA large subunit methyltransferase G (376 aa).

It belongs to the methyltransferase superfamily. RlmG family.

It is found in the cytoplasm. The catalysed reaction is guanosine(1835) in 23S rRNA + S-adenosyl-L-methionine = N(2)-methylguanosine(1835) in 23S rRNA + S-adenosyl-L-homocysteine + H(+). Specifically methylates the guanine in position 1835 (m2G1835) of 23S rRNA. The chain is Ribosomal RNA large subunit methyltransferase G from Klebsiella pneumoniae (strain 342).